An 801-amino-acid chain; its full sequence is Cadherin-20 (801 aa).

Residues methionine 1–serine 34 form the signal peptide. The propeptide occupies serine 35–arginine 59. At serine 60–arginine 619 the chain is on the extracellular side. 5 Cadherin domains span residues tryptophan 61–phenylalanine 165, leucine 166–phenylalanine 274, proline 275–phenylalanine 389, glutamate 390–phenylalanine 494, and phenylalanine 494–alanine 610. Asparagine 261 carries N-linked (GlcNAc...) asparagine glycosylation. N-linked (GlcNAc...) asparagine glycosylation is found at asparagine 420, asparagine 461, and asparagine 542. Residues glycine 620 to leucine 640 form a helical membrane-spanning segment. Topologically, residues serine 641–tryptophan 801 are cytoplasmic.

In terms of tissue distribution, expressed in brain. Highest level of expression in the retina. In embryo it is synthesized by the forebrain, anterior neural ridge, developing visual system, primitive external granular layer of the cerebellum and a subset of neural crest cells likely to develop into melanoblasts.

The protein resides in the cell membrane. Its function is as follows. Cadherins are calcium-dependent cell adhesion proteins. They preferentially interact with themselves in a homophilic manner in connecting cells; cadherins may thus contribute to the sorting of heterogeneous cell types. This chain is Cadherin-20 (Cdh20), found in Mus musculus (Mouse).